The sequence spans 203 residues: Putative 3-methyladenine DNA glycosylase (203 aa).

The protein belongs to the DNA glycosylase MPG family.

The protein is Putative 3-methyladenine DNA glycosylase of Clostridium botulinum (strain Loch Maree / Type A3).